The sequence spans 926 residues: Protein O-mannosyl-transferase Tmtc3 (926 aa).

The interval 1–26 (MSTNPNPGIHQYAPSTLPREREREGA) is disordered. Residues 1–36 (MSTNPNPGIHQYAPSTLPREREREGATNSPQRNLLE) are Cytoplasmic-facing. A helical membrane pass occupies residues 37–57 (FLCICVACIVCYYNSTQCGLV). The Extracellular portion of the chain corresponds to 58–114 (FDDISAIRDNKDLRPHTPLINVFLNDFWGTPMRKEQSHKSYRPLTVLTFRFNYLLHA). A helical transmembrane segment spans residues 115-135 (LEPFGYHLVNLLLHLSVCLLW). Over 136-169 (RRVCRLLLRQCAASGSNAISAPSSSSVSQLNTCA) the chain is Cytoplasmic. Residues 170-190 (FVASLLFAVHPVHTEAVTGVV) form a helical membrane-spanning segment. Topologically, residues 191–192 (GR) are extracellular. A helical membrane pass occupies residues 193 to 213 (AELLSSICFLAAFLSYAKSVG). Over 214–222 (DSGCPRRTN) the chain is Cytoplasmic. 2 helical membrane passes run 223-239 (WLTL…ASML) and 240-259 (CKEQ…LFVV). The Cytoplasmic segment spans residues 260-303 (HQLRPLHLCHFVLRLFDERTEQQSPKLANPSGIRRWSSSTLWKR). The helical transmembrane segment at 304 to 324 (LSFLVGITLTLLVGRVYVMGS) threads the bilayer. Residues 325–345 (QLPIFTRFDNPASAADTPERQ) lie on the Extracellular side of the membrane. The helical transmembrane segment at 346–366 (LTYGYLIYLNCWLLLCPSLLC) threads the bilayer. Residues 367 to 384 (CDWTMGTVPLLQGFTDSR) lie on the Cytoplasmic side of the membrane. The helical transmembrane segment at 385-405 (NITTLLTFLALGAMVAKTCFT) threads the bilayer. Topologically, residues 406-419 (RNLALSRTLIMCLG) are extracellular. The chain crosses the membrane as a helical span at residues 420–440 (WMVLPFLPASNLFFPVGFVVA). The Cytoplasmic segment spans residues 441-442 (ER). A helical transmembrane segment spans residues 443-463 (ILYMPSMGYCLLVAYGFEQLQ). Residues 464-926 (RRGSLSWQRF…RPTHKSRKRS (463 aa)) lie on the Extracellular side of the membrane. TPR repeat units lie at residues 514 to 547 (AKLY…QTDD), 548 to 581 (IGAH…FPQA), 596 to 630 (LNVF…RSDY), 631 to 664 (VQAY…DNEN), 665 to 698 (ADIY…YPEH), 736 to 769 (EKVY…KADF), 770 to 803 (RSAL…HPSH), 805 to 838 (KGLI…DPHN), and 839 to 872 (TQGL…APAE). Residues asparagine 609 and asparagine 645 are each glycosylated (N-linked (GlcNAc...) asparagine).

The protein belongs to the TMTC family.

It is found in the membrane. It localises to the endoplasmic reticulum. It carries out the reaction a di-trans,poly-cis-dolichyl beta-D-mannosyl phosphate + L-seryl-[protein] = 3-O-(alpha-D-mannosyl)-L-seryl-[protein] + a di-trans,poly-cis-dolichyl phosphate + H(+). The enzyme catalyses a di-trans,poly-cis-dolichyl beta-D-mannosyl phosphate + L-threonyl-[protein] = 3-O-(alpha-D-mannosyl)-L-threonyl-[protein] + a di-trans,poly-cis-dolichyl phosphate + H(+). Its pathway is protein modification; protein glycosylation. Functionally, transfers mannosyl residues to the hydroxyl group of serine or threonine residues. This is Protein O-mannosyl-transferase Tmtc3 from Drosophila melanogaster (Fruit fly).